Here is a 66-residue protein sequence, read N- to C-terminus: Large ribosomal subunit protein uL29 (66 aa).

Belongs to the universal ribosomal protein uL29 family.

The sequence is that of Large ribosomal subunit protein uL29 from Thermococcus sibiricus (strain DSM 12597 / MM 739).